The following is a 479-amino-acid chain: ATP synthase subunit beta (479 aa).

Position 153–160 (153–160 (GGAGVGKT)) interacts with ATP.

It belongs to the ATPase alpha/beta chains family. In terms of assembly, F-type ATPases have 2 components, CF(1) - the catalytic core - and CF(0) - the membrane proton channel. CF(1) has five subunits: alpha(3), beta(3), gamma(1), delta(1), epsilon(1). CF(0) has three main subunits: a(1), b(2) and c(9-12). The alpha and beta chains form an alternating ring which encloses part of the gamma chain. CF(1) is attached to CF(0) by a central stalk formed by the gamma and epsilon chains, while a peripheral stalk is formed by the delta and b chains.

Its subcellular location is the cell membrane. The catalysed reaction is ATP + H2O + 4 H(+)(in) = ADP + phosphate + 5 H(+)(out). Functionally, produces ATP from ADP in the presence of a proton gradient across the membrane. The catalytic sites are hosted primarily by the beta subunits. This is ATP synthase subunit beta from Lactobacillus delbrueckii subsp. bulgaricus (strain ATCC BAA-365 / Lb-18).